The chain runs to 137 residues: MKLKVKIAIPGKVVWENEVDEVNIQTTTGKIGILPNHAPIIATVETSVLRMKSDESQNPILMVISDGYLSLEKNSIFIATDRCILEDNINASKLEEDYKTALERYNNAEKPGKKYIANKALKRINACYEILSYRNND.

Belongs to the ATPase epsilon chain family. In terms of assembly, F-type ATPases have 2 components, CF(1) - the catalytic core - and CF(0) - the membrane proton channel. CF(1) has five subunits: alpha(3), beta(3), gamma(1), delta(1), epsilon(1). CF(0) has three main subunits: a, b and c.

It is found in the plastid. The protein localises to the chloroplast thylakoid membrane. Functionally, produces ATP from ADP in the presence of a proton gradient across the membrane. The sequence is that of ATP synthase epsilon chain, chloroplastic from Bigelowiella natans (Pedinomonas minutissima).